A 213-amino-acid chain; its full sequence is Urease accessory protein UreG (213 aa).

14–21 is a binding site for GTP; that stretch reads GPVGSGKT.

This sequence belongs to the SIMIBI class G3E GTPase family. UreG subfamily. In terms of assembly, homodimer. UreD, UreF and UreG form a complex that acts as a GTP-hydrolysis-dependent molecular chaperone, activating the urease apoprotein by helping to assemble the nickel containing metallocenter of UreC. The UreE protein probably delivers the nickel.

The protein resides in the cytoplasm. Functionally, facilitates the functional incorporation of the urease nickel metallocenter. This process requires GTP hydrolysis, probably effectuated by UreG. This Mesorhizobium japonicum (strain LMG 29417 / CECT 9101 / MAFF 303099) (Mesorhizobium loti (strain MAFF 303099)) protein is Urease accessory protein UreG.